Consider the following 1034-residue polypeptide: Receptor-type guanylate cyclase gcy-25 (1034 aa).

Positions 1–16 are cleaved as a signal peptide; the sequence is MLLLLLLLKISTFVDS. Topologically, residues 17–409 are extracellular; it reads FQIGHLEFEN…YDNNLCSDFH (393 aa). 5 N-linked (GlcNAc...) asparagine glycosylation sites follow: N28, N224, N301, N308, and N373. The chain crosses the membrane as a helical span at residues 410–430; sequence VFMIAAIVFSILLIPMAIAFY. The Cytoplasmic portion of the chain corresponds to 431–1034; that stretch reads LQRKEHLIQQ…DNSKKMFLNV (604 aa). Positions 464–749 constitute a Protein kinase domain; it reads RVSTISTARA…KITDAVNREF (286 aa). Residues 470 to 478 and K497 each bind ATP; that span reads TARASYSSI. Residues 758-785 are a coiled coil; sequence IDQMIEMIDEYSANLEQIVAERTRELEQ. One can recognise a Guanylate cyclase domain in the interval 821-951; it reads TLLVVDVCQF…DTVNMACRMA (131 aa).

Belongs to the adenylyl cyclase class-4/guanylyl cyclase family. Expressed in AQR, PQR and URX sensory neurons.

Its subcellular location is the cell membrane. The enzyme catalyses GTP = 3',5'-cyclic GMP + diphosphate. Guanylate cyclase involved in the production of the second messenger cGMP. The sequence is that of Receptor-type guanylate cyclase gcy-25 from Caenorhabditis elegans.